Reading from the N-terminus, the 433-residue chain is Glutamate-1-semialdehyde 2,1-aminomutase (433 aa).

Position 271 is an N6-(pyridoxal phosphate)lysine (Lys271).

This sequence belongs to the class-III pyridoxal-phosphate-dependent aminotransferase family. HemL subfamily. In terms of assembly, homodimer. The cofactor is pyridoxal 5'-phosphate.

Its subcellular location is the cytoplasm. It catalyses the reaction (S)-4-amino-5-oxopentanoate = 5-aminolevulinate. The protein operates within porphyrin-containing compound metabolism; protoporphyrin-IX biosynthesis; 5-aminolevulinate from L-glutamyl-tRNA(Glu): step 2/2. Its pathway is porphyrin-containing compound metabolism; chlorophyll biosynthesis. This chain is Glutamate-1-semialdehyde 2,1-aminomutase, found in Prochlorococcus marinus (strain AS9601).